A 158-amino-acid polypeptide reads, in one-letter code: NAD(P)H-quinone oxidoreductase subunit J, chloroplastic (158 aa).

This sequence belongs to the complex I 30 kDa subunit family. NDH is composed of at least 16 different subunits, 5 of which are encoded in the nucleus.

It is found in the plastid. Its subcellular location is the chloroplast thylakoid membrane. It catalyses the reaction a plastoquinone + NADH + (n+1) H(+)(in) = a plastoquinol + NAD(+) + n H(+)(out). It carries out the reaction a plastoquinone + NADPH + (n+1) H(+)(in) = a plastoquinol + NADP(+) + n H(+)(out). In terms of biological role, NDH shuttles electrons from NAD(P)H:plastoquinone, via FMN and iron-sulfur (Fe-S) centers, to quinones in the photosynthetic chain and possibly in a chloroplast respiratory chain. The immediate electron acceptor for the enzyme in this species is believed to be plastoquinone. Couples the redox reaction to proton translocation, and thus conserves the redox energy in a proton gradient. In Jasminum nudiflorum (Winter jasmine), this protein is NAD(P)H-quinone oxidoreductase subunit J, chloroplastic.